The primary structure comprises 555 residues: Solute carrier family 2, facilitated glucose transporter member 10 (555 aa).

At 1–15 the chain is on the cytoplasmic side; the sequence is MGLSSPTLILAATVS. A helical membrane pass occupies residues 16 to 36; the sequence is LLGGIVFGYELGIISGALLVL. The Extracellular segment spans residues 37 to 48; sequence KTVYQLTCFEQE. A helical transmembrane segment spans residues 49–69; the sequence is ALVSAVLFGALLASLIGGIII. Over 70–82 the chain is Cytoplasmic; that stretch reads DRWGRRTAILASN. Residues 83–103 traverse the membrane as a helical segment; the sequence is LVVLAGSIILIATSTFWWLIV. Over 104–105 the chain is Extracellular; the sequence is GR. The chain crosses the membrane as a helical span at residues 106 to 126; sequence VTIGFAISISSMACCIYVSEI. At 127 to 132 the chain is on the cytoplasmic side; the sequence is VRPHQR. Residues 133 to 153 form a helical membrane-spanning segment; it reads GMLVSLYETGITVGILISYAM. Residues 154–165 lie on the Extracellular side of the membrane; the sequence is NYFLSGVNESWK. N-linked (GlcNAc...) asparagine glycosylation occurs at N161. A helical transmembrane segment spans residues 166-186; that stretch reads YMFGLAIVPAAFQFISILFLP. At 187 to 240 the chain is on the cytoplasmic side; it reads SKPHKLNFWEQDTDDGFIELEETGEAGEFKPDTYDRQYTFLDLFRSKDNMRTRT. A helical transmembrane segment spans residues 241–261; it reads LLGLGLVLFQQFTGQPNVLYY. 250–251 is a binding site for D-glucose; it reads QQ. Residues 262–277 lie on the Extracellular side of the membrane; that stretch reads ASTIFQSVGFQSNSSA. Residue N274 is glycosylated (N-linked (GlcNAc...) asparagine). The helical transmembrane segment at 278 to 298 threads the bilayer; it reads VLASVGLGVVKVASTLIAICF. The Cytoplasmic portion of the chain corresponds to 299–305; that stretch reads ADKAGRR. A helical transmembrane segment spans residues 306-326; it reads ILLLAGCIVMTIAITGIGIVS. Residues 327–415 are Extracellular-facing; it reads FTVKMDSHRD…ASPELPSNYT (89 aa). N-linked (GlcNAc...) asparagine glycans are attached at residues N344, N351, N400, and N413. A helical membrane pass occupies residues 416 to 436; it reads ILNWITLLSMMAFVSAFSIGF. Residues 437–464 are Cytoplasmic-facing; sequence GPMTWIVLSEIYPADIRGRAFAFCNSFN. W441 provides a ligand contact to D-glucose. A helical transmembrane segment spans residues 465-483; that stretch reads WAANLLITLTFLDVIASIG. Topologically, residues 484 to 485 are extracellular; sequence LS. The chain crosses the membrane as a helical span at residues 486–506; sequence WTFLLYGVVGLLAIAFIYFFI. Residues 507–555 lie on the Cytoplasmic side of the membrane; the sequence is PETKGQSLEEIDKQFSTKRILQKRETSKGVGKRPSSGPPYQRIGKASPS. Positions 528-555 are disordered; that stretch reads QKRETSKGVGKRPSSGPPYQRIGKASPS.

It belongs to the major facilitator superfamily. Sugar transporter (TC 2.A.1.1) family. Glucose transporter subfamily.

The protein resides in the endomembrane system. The protein localises to the cytoplasm. It localises to the perinuclear region. It catalyses the reaction D-glucose(out) = D-glucose(in). Facilitative glucose transporter required for the development of the cardiovascular system. This chain is Solute carrier family 2, facilitated glucose transporter member 10, found in Xenopus tropicalis (Western clawed frog).